Reading from the N-terminus, the 179-residue chain is Ribulose bisphosphate carboxylase small subunit, chloroplastic 3 (179 aa).

The N-terminal 58 residues, 1 to 58 (MASSATMLSSVATAARAAPAQASMVAPFVGLKSASAFPVTQKPATGLSTLPSNGGRVQ), are a transit peptide targeting the chloroplast.

The protein belongs to the RuBisCO small chain family. In terms of assembly, heterohexadecamer of 8 large and 8 small subunits.

It localises to the plastid. Its subcellular location is the chloroplast. Its function is as follows. RuBisCO catalyzes two reactions: the carboxylation of D-ribulose 1,5-bisphosphate, the primary event in carbon dioxide fixation, as well as the oxidative fragmentation of the pentose substrate. Both reactions occur simultaneously and in competition at the same active site. Although the small subunit is not catalytic it is essential for maximal activity. In Fritillaria agrestis (Stinkbells), this protein is Ribulose bisphosphate carboxylase small subunit, chloroplastic 3.